The chain runs to 293 residues: Diaminopimelate epimerase (293 aa).

The substrate site is built by Asn-17, Gln-47, and Asn-67. Cys-76 functions as the Proton donor in the catalytic mechanism. Substrate-binding positions include 77–78, Asn-164, Asn-197, and 215–216; these read GN and ER. Residue Cys-224 is the Proton acceptor of the active site. 225 to 226 is a substrate binding site; sequence GS.

The protein belongs to the diaminopimelate epimerase family. In terms of assembly, homodimer.

Its subcellular location is the cytoplasm. The enzyme catalyses (2S,6S)-2,6-diaminopimelate = meso-2,6-diaminopimelate. It participates in amino-acid biosynthesis; L-lysine biosynthesis via DAP pathway; DL-2,6-diaminopimelate from LL-2,6-diaminopimelate: step 1/1. Functionally, catalyzes the stereoinversion of LL-2,6-diaminopimelate (L,L-DAP) to meso-diaminopimelate (meso-DAP), a precursor of L-lysine and an essential component of the bacterial peptidoglycan. This Rhodopseudomonas palustris (strain ATCC BAA-98 / CGA009) protein is Diaminopimelate epimerase.